Reading from the N-terminus, the 400-residue chain is Telomere repeat-binding protein 6 (400 aa).

Residues 173-252 (VKFGIKSLNI…DDENLGSLGF (80 aa)) form the Ubiquitin-like domain. The HTH myb-type domain maps to 310–369 (VQRRIRRPFTVSEVEALVQAVERLGTGRWRDVKSHAFNHVNHRTYVDLKDKWKTLVHTAK). Positions 338 to 365 (WRDVKSHAFNHVNHRTYVDLKDKWKTLV) form a DNA-binding region, H-T-H motif.

Homodimer. Expressed ubiquitously.

Its subcellular location is the nucleus. In terms of biological role, binds specifically to the plant telomeric double-stranded DNA sequences. At least 4 repeats of telomeric sequences are required for binding. This chain is Telomere repeat-binding protein 6 (TRP6), found in Arabidopsis thaliana (Mouse-ear cress).